A 717-amino-acid chain; its full sequence is Epithelial splicing regulatory protein 2 (717 aa).

Positions 1-14 (MTPPPPPPPPPGPD) are enriched in pro residues. Positions 1–23 (MTPPPPPPPPPGPDPAVDSATDP) are disordered. S83 carries the phosphoserine modification. 3 RRM domains span residues 247–343 (TVVR…RFLS), 348–428 (VILR…RSTA), and 465–545 (DCVR…PCST). Position 563 is a phosphoserine (S563).

This sequence belongs to the ESRP family. Interacts with RBPMS. Epithelial cell-specific.

Its subcellular location is the nucleus. Its function is as follows. mRNA splicing factor that regulates the formation of epithelial cell-specific isoforms. Specifically regulates the expression of FGFR2-IIIb, an epithelial cell-specific isoform of FGFR2. Also regulates the splicing of CD44, CTNND1, ENAH, 3 transcripts that undergo changes in splicing during the epithelial-to-mesenchymal transition (EMT). Acts by directly binding specific sequences in mRNAs. Binds the GU-rich sequence motifs in the ISE/ISS-3, a cis-element regulatory region present in the mRNA of FGFR2. This Mus musculus (Mouse) protein is Epithelial splicing regulatory protein 2 (Esrp2).